Consider the following 363-residue polypeptide: NADH-quinone oxidoreductase subunit H (363 aa).

10 helical membrane passes run 29-49, 62-82, 96-116, 127-147, 163-183, 202-222, 239-257, 264-286, 299-319, and 339-359; these read VLKI…YVVW, GPMY…KLLF, FIIA…VVPF, VGLL…ILAG, AAQV…VMIA, FFDW…VSGV, IVAG…LFFL, ILVS…QGWV, TGGW…YIWF, and FIPL…YGVI.

Belongs to the complex I subunit 1 family. NDH-1 is composed of 14 different subunits. Subunits NuoA, H, J, K, L, M, N constitute the membrane sector of the complex.

It is found in the cell inner membrane. The catalysed reaction is a quinone + NADH + 5 H(+)(in) = a quinol + NAD(+) + 4 H(+)(out). NDH-1 shuttles electrons from NADH, via FMN and iron-sulfur (Fe-S) centers, to quinones in the respiratory chain. The immediate electron acceptor for the enzyme in this species is believed to be ubiquinone. Couples the redox reaction to proton translocation (for every two electrons transferred, four hydrogen ions are translocated across the cytoplasmic membrane), and thus conserves the redox energy in a proton gradient. This subunit may bind ubiquinone. This is NADH-quinone oxidoreductase subunit H from Xanthomonas campestris pv. campestris (strain B100).